The chain runs to 294 residues: Bifunctional protein FolD (294 aa).

Residues 166 to 168 (GRS), S191, and I232 each bind NADP(+).

It belongs to the tetrahydrofolate dehydrogenase/cyclohydrolase family. As to quaternary structure, homodimer.

The enzyme catalyses (6R)-5,10-methylene-5,6,7,8-tetrahydrofolate + NADP(+) = (6R)-5,10-methenyltetrahydrofolate + NADPH. The catalysed reaction is (6R)-5,10-methenyltetrahydrofolate + H2O = (6R)-10-formyltetrahydrofolate + H(+). The protein operates within one-carbon metabolism; tetrahydrofolate interconversion. Functionally, catalyzes the oxidation of 5,10-methylenetetrahydrofolate to 5,10-methenyltetrahydrofolate and then the hydrolysis of 5,10-methenyltetrahydrofolate to 10-formyltetrahydrofolate. The protein is Bifunctional protein FolD of Nitrobacter winogradskyi (strain ATCC 25391 / DSM 10237 / CIP 104748 / NCIMB 11846 / Nb-255).